We begin with the raw amino-acid sequence, 283 residues long: Polyamine aminopropyltransferase (283 aa).

The PABS domain maps to 5–238 (TTWIDEYHKG…GIWSWTFASS (234 aa)). Gln32 serves as a coordination point for S-methyl-5'-thioadenosine. Spermidine is bound by residues His63 and Asp87. S-methyl-5'-thioadenosine-binding positions include Glu107 and 139 to 140 (DG). The active-site Proton acceptor is Asp158. Residue 158–161 (DCSD) coordinates spermidine.

Belongs to the spermidine/spermine synthase family. In terms of assembly, homodimer or homotetramer.

The protein resides in the cytoplasm. It catalyses the reaction S-adenosyl 3-(methylsulfanyl)propylamine + putrescine = S-methyl-5'-thioadenosine + spermidine + H(+). It functions in the pathway amine and polyamine biosynthesis; spermidine biosynthesis; spermidine from putrescine: step 1/1. Catalyzes the irreversible transfer of a propylamine group from the amino donor S-adenosylmethioninamine (decarboxy-AdoMet) to putrescine (1,4-diaminobutane) to yield spermidine. This Prochlorococcus marinus (strain AS9601) protein is Polyamine aminopropyltransferase.